The following is a 182-amino-acid chain: Adenine phosphoribosyltransferase (182 aa).

Belongs to the purine/pyrimidine phosphoribosyltransferase family. As to quaternary structure, homodimer.

It is found in the cytoplasm. The catalysed reaction is AMP + diphosphate = 5-phospho-alpha-D-ribose 1-diphosphate + adenine. It functions in the pathway purine metabolism; AMP biosynthesis via salvage pathway; AMP from adenine: step 1/1. Functionally, catalyzes a salvage reaction resulting in the formation of AMP, that is energically less costly than de novo synthesis. The sequence is that of Adenine phosphoribosyltransferase from Campylobacter jejuni subsp. jejuni serotype O:2 (strain ATCC 700819 / NCTC 11168).